The following is a 124-amino-acid chain: Large ribosomal subunit protein bL12 (124 aa).

The tract at residues 93-124 (GAPSTVKEGASKDEAEEAKKKLEEAGASVELK) is disordered. Positions 101–116 (GASKDEAEEAKKKLEE) are enriched in basic and acidic residues.

The protein belongs to the bacterial ribosomal protein bL12 family. In terms of assembly, homodimer. Part of the ribosomal stalk of the 50S ribosomal subunit. Forms a multimeric L10(L12)X complex, where L10 forms an elongated spine to which 2 to 4 L12 dimers bind in a sequential fashion. Binds GTP-bound translation factors.

Its function is as follows. Forms part of the ribosomal stalk which helps the ribosome interact with GTP-bound translation factors. Is thus essential for accurate translation. This Marinobacter nauticus (strain ATCC 700491 / DSM 11845 / VT8) (Marinobacter aquaeolei) protein is Large ribosomal subunit protein bL12.